We begin with the raw amino-acid sequence, 115 residues long: MLDDNSQDISIPEAVVVLCTAPDEATAQDLAAKVLAEKLAACATLLPGATSLYYWEGKLEQEYEVQMILKTTVSHQQALLECLKSHHPYQTPELLVLPVTHGDTDYLSWLNASLR.

Cu cation is bound by residues Cys-19, His-86, and His-87.

This sequence belongs to the CutA family. As to quaternary structure, homotrimer. The cofactor is Cu cation.

It is found in the cytoplasm. Involved in resistance toward heavy metals. The polypeptide is Divalent-cation tolerance protein CutA (Citrobacter koseri (strain ATCC BAA-895 / CDC 4225-83 / SGSC4696)).